Here is a 297-residue protein sequence, read N- to C-terminus: Cell death peptidase (297 aa).

2 helical membrane-spanning segments follow: residues 61–82 and 149–178; these read IVLT…WVFT and IFLC…AFST.

Belongs to the peptidase U49 family.

The protein localises to the cell membrane. Its function is as follows. Interacts with a short DNA sequence about one-quarter of the way into the major capsid protein gene 23 of T4; general translation inhibition occurs when this late gene of the virus is expressed. This chain is Cell death peptidase (lit), found in Escherichia coli (strain K12).